The chain runs to 453 residues: Malate dehydrogenase [NADP], chloroplastic (453 aa).

The N-terminal 68 residues, 1-68 (MAVVKLSPWA…RLSSPASIRC (68 aa)), are a transit peptide targeting the chloroplast. Residues C88 and C93 are joined by a disulfide bond. 117–123 (GAAGMIS) lines the NADP(+) pocket. Positions 198 and 204 each coordinate substrate. NADP(+)-binding positions include N211, Q218, and 235–237 (VGN). N237 and R268 together coordinate substrate. H293 functions as the Proton acceptor in the catalytic mechanism. C429 and C441 are disulfide-bonded.

It belongs to the LDH/MDH superfamily. MDH type 2 family. Homodimer.

It is found in the plastid. Its subcellular location is the chloroplast. It carries out the reaction (S)-malate + NADP(+) = oxaloacetate + NADPH + H(+). Chloroplast NADP-MDH is activated upon illumination. In order to be enzymatically active, disulfide bridges on the protein must be reduced by thioredoxin which receives electrons from ferredoxin and the electron transport system of photosynthesis. In terms of biological role, the chloroplastic, NADP-dependent form is essential for the photosynthesis C4 cycle, which allows plants to circumvent the problem of photorespiration. In C4 plants, NADP-MDH activity acts to convert oxaloacetate to malate in chloroplasts of mesophyll cells for transport to the bundle sheath cells. The sequence is that of Malate dehydrogenase [NADP], chloroplastic from Flaveria bidentis (Coastal plain yellowtops).